The sequence spans 396 residues: Cytochrome c biogenesis protein Ccs1 (396 aa).

Helical transmembrane passes span 22 to 42 (LKFS…GTII), 79 to 99 (SNFY…CSLK), and 162 to 182 (AGPL…AIHA).

This sequence belongs to the Ccs1/CcsB family. May interact with CcsA.

The protein resides in the plastid. Its subcellular location is the chloroplast thylakoid membrane. Its function is as follows. Required during biogenesis of c-type cytochromes (cytochrome c6 and cytochrome f) at the step of heme attachment. The sequence is that of Cytochrome c biogenesis protein Ccs1 from Cyanidium caldarium (Red alga).